The primary structure comprises 395 residues: MTDKQLDTKLVNAGRSKKYTLGSVNSVIQRASSLVFDTVEAKKHATRNLANGELFYGRRGTLTHFSLQEAMCELEGGAGCALFPCGAAAVANTILAFVEQGDHILMTNTAYEPSQDFCSKILGKLGVTTSWFDPLIGADITQHIQPNTKVVFLESPGSITMEVHDIPSIVSAVRRVAPEAVIMIDNTWAAGVLFKALEFDIDISIQAGTKYLIGHSDAMVGTAVANARCWEQLRENAYLMGQMLDADTAYMTSRGLRTLGVRLRQHQESSLKIAAWLANHPQVARVNHPALPGSKGHAFWKRDFTGSSGLFSFVLNKKLTEAELSAYLDNFSLFSMAYSWGGYESLIIANQPEQIAAIRPAGGVDFTGTLVRVHIGLESVDDLIADLAAGFARIV.

At Lys-210 the chain carries N6-(pyridoxal phosphate)lysine.

The protein belongs to the trans-sulfuration enzymes family. In terms of assembly, homotetramer. Pyridoxal 5'-phosphate serves as cofactor.

The protein localises to the cytoplasm. It carries out the reaction L,L-cystathionine + H2O = L-homocysteine + pyruvate + NH4(+). The enzyme catalyses an S-substituted L-cysteine + H2O = a thiol + pyruvate + NH4(+). It participates in amino-acid biosynthesis; L-methionine biosynthesis via de novo pathway; L-homocysteine from L-cystathionine: step 1/1. Its function is as follows. Catalyzes the cleavage of cystathionine to homocysteine, pyruvate and ammonia during methionine biosynthesis. This is Cystathionine beta-lyase (metC) from Salmonella typhimurium (strain LT2 / SGSC1412 / ATCC 700720).